A 367-amino-acid chain; its full sequence is tRNA uridine(34) hydroxylase (367 aa).

The 91-residue stretch at 159–249 (EDKNSIVVDV…GIISYAHEIS (91 aa)) folds into the Rhodanese domain. Cysteine 213 functions as the Cysteine persulfide intermediate in the catalytic mechanism.

Belongs to the TrhO family.

The enzyme catalyses uridine(34) in tRNA + AH2 + O2 = 5-hydroxyuridine(34) in tRNA + A + H2O. In terms of biological role, catalyzes oxygen-dependent 5-hydroxyuridine (ho5U) modification at position 34 in tRNAs. The sequence is that of tRNA uridine(34) hydroxylase from Leptospira borgpetersenii serovar Hardjo-bovis (strain L550).